Consider the following 638-residue polypeptide: Chaperone protein HtpG (638 aa).

Residues 1 to 344 (MQKKETLEFQ…SNDLPLNVSR (344 aa)) form an a; substrate-binding region. Residues 345-560 (EILQNNENIY…ENDITTQMSK (216 aa)) form a b region. The c stretch occupies residues 561-638 (LLISTGQESP…LLLSNIIRLN (78 aa)).

Belongs to the heat shock protein 90 family. Homodimer.

Its subcellular location is the cytoplasm. Molecular chaperone. Has ATPase activity. The polypeptide is Chaperone protein HtpG (Wigglesworthia glossinidia brevipalpis).